The chain runs to 633 residues: Proline-rich protein LAS17 (633 aa).

The WH1 domain maps to 16 to 127 (LPKASNKIID…KRVQKRERYA (112 aa)). Disordered regions lie at residues 145-545 (REEQ…TTGD) and 563-606 (ALRK…PASL). The segment covering 192–215 (AETFDSDQTSSFSDINSTTASAPT) has biased composition (low complexity). 2 stretches are compositionally biased toward pro residues: residues 216–225 (TPAPALPPAS) and 238–256 (SLPP…PQHN). 2 stretches are compositionally biased toward low complexity: residues 257–269 (SPPQ…QPQS) and 307–322 (PQQN…RNNR). T334 carries the post-translational modification Phosphothreonine. Phosphoserine is present on S337. The span at 342-357 (PAPPPPPRRGPAPPPP) shows a compositional bias: pro residues. Polar residues-rich tracts occupy residues 363–376 (TSNT…NSLL), 399–414 (NVTM…NSNR), and 454–465 (PQNTQAPSQATN). The segment covering 479–488 (QSQIPQSAPS) has biased composition (low complexity). In terms of domain architecture, WH2 spans 547-567 (GRDALLASIRGAGGIGALRKV). Residue S588 is modified to Phosphoserine.

As to quaternary structure, interacts with KRE6, LSB3, LSB5 and YSC84.

This is Proline-rich protein LAS17 (LAS17) from Saccharomyces cerevisiae (strain ATCC 204508 / S288c) (Baker's yeast).